A 311-amino-acid chain; its full sequence is MSKILVFGHQNPDTDAIASSYAFDYLSQKAFGLDTEVVALGTPNEETAFALDYFGVEAPRVVESAKAQGSEQVILTDHNEFQQSIADIREVEVYGVVDHHRVANFETANPLYMRVEPVGSASSIVYRMFKENGIEVPKAIAGMLLSGLISDTLLLKSPTTHVSDHLVAEELAELAEVNLEDYGMALLKAGTNLASKSEVELIGIDAKTFELNGNAVRVAQVNTVDISEVLERQEAIEAAIKDAMAAEGYSDFVLMITDIVNSNSEILAIGANMDKVEAAFNFTLDNNHAFLAGAVSRKKQVVPQLTESFGA.

Positions 9, 13, 15, 77, 99, and 151 each coordinate Mn(2+).

The protein belongs to the PPase class C family. Mn(2+) is required as a cofactor.

The protein localises to the cytoplasm. The enzyme catalyses diphosphate + H2O = 2 phosphate + H(+). The chain is Probable manganese-dependent inorganic pyrophosphatase from Streptococcus pyogenes serotype M49 (strain NZ131).